The chain runs to 591 residues: Fanconi anemia group C protein homolog (591 aa).

In terms of assembly, belongs to the multisubunit FA complex composed of FANCA, FANCB, FANCC, FANCE, FANCF, FANCG, FANCL/PHF9 and FANCM. This complex may also include HSP70. Interacts with ZBTB32. Upon IFNG induction, interacts with STAT1. Interacts with CDK1. Interacts with EIF2AK2. As to expression, ubiquitous.

Its subcellular location is the nucleus. It localises to the cytoplasm. Functionally, DNA repair protein that may operate in a postreplication repair or a cell cycle checkpoint function. May be implicated in interstrand DNA cross-link repair and in the maintenance of normal chromosome stability. Upon IFNG induction, may facilitate STAT1 activation by recruiting STAT1 to IFNGR1. This Mus musculus (Mouse) protein is Fanconi anemia group C protein homolog (Fancc).